The primary structure comprises 516 residues: mRNA export factor ICP27 homolog (516 aa).

Zn(2+) contacts are provided by C231, H336, C338, and C343. The CHC2-type zinc-finger motif lies at 231 to 343 (CVFNDNGHGD…SNHKCDDVSC (113 aa)). A compositionally biased stretch (polar residues) spans 399–409 (YSTSRDLPQTS). Residues 399–423 (YSTSRDLPQTSHRSHKNQGTPKVKS) are disordered.

Belongs to the HHV-1 ICP27 protein family.

The protein resides in the virion tegument. It is found in the virion. It localises to the host nucleus. Its subcellular location is the host cytoplasm. Functionally, immediate early (EI) protein that plays many roles during productive infection including regulation of viral gene expression and nuclear export of intronless viral RNAs. The chain is mRNA export factor ICP27 homolog from Homo sapiens (Human).